Here is a 720-residue protein sequence, read N- to C-terminus: Protein arginine N-methyltransferase 7 (720 aa).

SAM-dependent MTase PRMT-type domains are found at residues 54-385 (DHHP…TSIS) and 387-720 (QLNI…TTCS). Active-site residues include E180 and E189.

The protein belongs to the class I-like SAM-binding methyltransferase superfamily. Protein arginine N-methyltransferase family. PRMT7 subfamily.

Its function is as follows. Arginine methyltransferase that can both catalyze the formation of omega-N monomethylarginine (MMA) and symmetrical dimethylarginine (sDMA). The sequence is that of Protein arginine N-methyltransferase 7 (PRMT7) from Oryza sativa subsp. japonica (Rice).